Reading from the N-terminus, the 155-residue chain is Ribosome maturation factor RimP (155 aa).

This sequence belongs to the RimP family.

The protein resides in the cytoplasm. Required for maturation of 30S ribosomal subunits. In Parasynechococcus marenigrum (strain WH8102), this protein is Ribosome maturation factor RimP.